A 329-amino-acid chain; its full sequence is CDP-6-deoxy-L-threo-D-glycero-4-hexulose-3-dehydrase reductase (329 aa).

Positions Ser2–Leu93 constitute a 2Fe-2S ferredoxin-type domain. [2Fe-2S] cluster-binding residues include Cys37, Cys42, Cys45, and Cys75. Positions Lys98–Arg197 constitute an FAD-binding FR-type domain.

Monomer.

It participates in nucleotide-sugar biosynthesis; CDP-ascarylose biosynthesis. The protein operates within bacterial outer membrane biogenesis; lipopolysaccharide biosynthesis. Functionally, participates in the conversion of CDP-6-deoxy-D-glycero-L-threo-4-hexulose to 3,6-dideoxy-D-glycero-D-glycero-4-hexulose together with CDP-6-deoxy-D-glycero-L-threo-4-hexulose-3-dehydrase (E1) in two consecutive steps. The detailed mechanism of E3 is not yet resolved. This is CDP-6-deoxy-L-threo-D-glycero-4-hexulose-3-dehydrase reductase (ascD) from Yersinia pestis.